The sequence spans 447 residues: N-succinylarginine dihydrolase (447 aa).

Substrate contacts are provided by residues 19-28 (AGLSFGNEAS), N110, and 137-138 (HR). Residue E174 is part of the active site. R214 is a substrate binding site. H250 is an active-site residue. Substrate-binding residues include D252 and N365. The active-site Nucleophile is C371.

It belongs to the succinylarginine dihydrolase family. As to quaternary structure, homodimer.

It catalyses the reaction N(2)-succinyl-L-arginine + 2 H2O + 2 H(+) = N(2)-succinyl-L-ornithine + 2 NH4(+) + CO2. It participates in amino-acid degradation; L-arginine degradation via AST pathway; L-glutamate and succinate from L-arginine: step 2/5. Functionally, catalyzes the hydrolysis of N(2)-succinylarginine into N(2)-succinylornithine, ammonia and CO(2). This is N-succinylarginine dihydrolase from Acinetobacter baumannii (strain ACICU).